The following is a 396-amino-acid chain: CCA-adding enzyme (396 aa).

Residues glycine 32 and arginine 35 each coordinate ATP. Positions 32 and 35 each coordinate CTP. 2 residues coordinate Mg(2+): aspartate 45 and aspartate 47. The ATP site is built by arginine 116, aspartate 159, arginine 162, arginine 165, and arginine 168. Residues arginine 116, aspartate 159, arginine 162, arginine 165, and arginine 168 each contribute to the CTP site.

It belongs to the tRNA nucleotidyltransferase/poly(A) polymerase family. Bacterial CCA-adding enzyme type 3 subfamily. Homodimer. Mg(2+) serves as cofactor.

The catalysed reaction is a tRNA precursor + 2 CTP + ATP = a tRNA with a 3' CCA end + 3 diphosphate. It catalyses the reaction a tRNA with a 3' CCA end + 2 CTP + ATP = a tRNA with a 3' CCACCA end + 3 diphosphate. In terms of biological role, catalyzes the addition and repair of the essential 3'-terminal CCA sequence in tRNAs without using a nucleic acid template. Adds these three nucleotides in the order of C, C, and A to the tRNA nucleotide-73, using CTP and ATP as substrates and producing inorganic pyrophosphate. tRNA 3'-terminal CCA addition is required both for tRNA processing and repair. Also involved in tRNA surveillance by mediating tandem CCA addition to generate a CCACCA at the 3' terminus of unstable tRNAs. While stable tRNAs receive only 3'-terminal CCA, unstable tRNAs are marked with CCACCA and rapidly degraded. The protein is CCA-adding enzyme of Lactobacillus delbrueckii subsp. bulgaricus (strain ATCC 11842 / DSM 20081 / BCRC 10696 / JCM 1002 / NBRC 13953 / NCIMB 11778 / NCTC 12712 / WDCM 00102 / Lb 14).